Consider the following 428-residue polypeptide: Light-independent protochlorophyllide reductase subunit N (428 aa).

The [4Fe-4S] cluster site is built by C30, C55, and C116.

Belongs to the BchN/ChlN family. Protochlorophyllide reductase is composed of three subunits; BchL, BchN and BchB. Forms a heterotetramer of two BchB and two BchN subunits. [4Fe-4S] cluster serves as cofactor.

It carries out the reaction chlorophyllide a + oxidized 2[4Fe-4S]-[ferredoxin] + 2 ADP + 2 phosphate = protochlorophyllide a + reduced 2[4Fe-4S]-[ferredoxin] + 2 ATP + 2 H2O. It participates in porphyrin-containing compound metabolism; bacteriochlorophyll biosynthesis (light-independent). Component of the dark-operative protochlorophyllide reductase (DPOR) that uses Mg-ATP and reduced ferredoxin to reduce ring D of protochlorophyllide (Pchlide) to form chlorophyllide a (Chlide). This reaction is light-independent. The NB-protein (BchN-BchB) is the catalytic component of the complex. In Bradyrhizobium sp. (strain BTAi1 / ATCC BAA-1182), this protein is Light-independent protochlorophyllide reductase subunit N.